The sequence spans 445 residues: Probable D-serine dehydratase (445 aa).

Lys111 carries the post-translational modification N6-(pyridoxal phosphate)lysine.

Belongs to the serine/threonine dehydratase family. DsdA subfamily. Pyridoxal 5'-phosphate is required as a cofactor.

The enzyme catalyses D-serine = pyruvate + NH4(+). This is Probable D-serine dehydratase from Burkholderia pseudomallei (strain 1710b).